A 125-amino-acid chain; its full sequence is MGFWKFLPFLVLSFLVVYQAGMFQAAPFRSALENDFDPAILTEKEMCLLLAAVMNDYVQMKTSELKQEAEHFHITAQKRSCNRATCVTHKMAGSLSRSGSEIKRNFMSTNVGSKAFGQRSRDLQK.

An N-terminal signal peptide occupies residues 1–25 (MGFWKFLPFLVLSFLVVYQAGMFQA). Residues 26 to 77 (APFRSALENDFDPAILTEKEMCLLLAAVMNDYVQMKTSELKQEAEHFHITAQ) constitute a propeptide that is removed on maturation. Cys81 and Cys86 are disulfide-bonded.

Belongs to the calcitonin family.

Its subcellular location is the secreted. The chain is Calcitonin receptor-stimulating peptide 2 (CRSP2) from Capra hircus (Goat).